The primary structure comprises 109 residues: Class I hydrophobin dewE (109 aa).

The signal sequence occupies residues 1–20 (MKVATALSVLAVAGSALASA). 4 disulfide bridges follow: Cys34-Cys87, Cys40-Cys81, Cys41-Cys74, and Cys88-Cys102.

This sequence belongs to the fungal hydrophobin family. In terms of assembly, self-assembles to form functional amyloid fibrils called rodlets. Self-assembly into fibrillar rodlets occurs spontaneously at hydrophobic:hydrophilic interfaces and the rodlets further associate laterally to form amphipathic monolayers.

It localises to the secreted. The protein resides in the spore wall. In terms of biological role, aerial growth, conidiation, and dispersal of filamentous fungi in the environment rely upon a capability of their secreting small amphipathic proteins called hydrophobins (HPBs) with low sequence identity. Class I can self-assemble into an outermost layer of rodlet bundles on aerial cell surfaces, conferring cellular hydrophobicity that supports fungal growth, development and dispersal; whereas Class II form highly ordered films at water-air interfaces through intermolecular interactions but contribute nothing to the rodlet structure. DewE is a class I hydrophobin that contributes to the hydrophobicity of the spore surface. The chain is Class I hydrophobin dewE from Emericella nidulans (strain FGSC A4 / ATCC 38163 / CBS 112.46 / NRRL 194 / M139) (Aspergillus nidulans).